We begin with the raw amino-acid sequence, 349 residues long: Leukotriene B4 receptor 1 (349 aa).

Residues 1–19 are Extracellular-facing; the sequence is MNTTSPAAPSSSGVSFISL. Residue N2 is glycosylated (N-linked (GlcNAc...) asparagine). Residues 20-42 form a helical membrane-spanning segment; that stretch reads LVIIVLSVALAVGLPGNSFVVWS. Topologically, residues 43–54 are cytoplasmic; sequence ILAKLRKRSVTA. The helical transmembrane segment at 55 to 75 threads the bilayer; sequence LMVLHLALADLAVLLTAPFFL. The Extracellular portion of the chain corresponds to 76–91; sequence YSVAQGTWTFGLSSCR. A helical membrane pass occupies residues 92–113; that stretch reads LFHYVCGVSMYASVLLIMTMSL. Over 114 to 138 the chain is Cytoplasmic; that stretch reads DRSLAVALPFVSQKLRTKAVAWRVL. Residues 139 to 159 traverse the membrane as a helical segment; the sequence is AGIWVMSVLLATPVLLYRTVH. Topologically, residues 160–179 are extracellular; it reads LGLNNRSLTCFLKYPSERHR. N-linked (GlcNAc...) asparagine glycosylation occurs at N164. A helical transmembrane segment spans residues 180–200; the sequence is AFHLFFEVITGFLLPFLVVVA. At 201–222 the chain is on the cytoplasmic side; it reads SYCDIGRRLRARRFRRSRRTGR. The chain crosses the membrane as a helical span at residues 223 to 243; that stretch reads LVALIILAFAAFWLPYHVVNL. The Extracellular portion of the chain corresponds to 244–269; that stretch reads AEGFRAAAGKALGSGPVGRRLLLARH. Residues 270-290 form a helical membrane-spanning segment; it reads VLITLAFLSSSVNPLLYACAG. At 291–349 the chain is on the cytoplasmic side; that stretch reads GGLLRSAGVGFIAKLLEGTGSETSSSRRKGTLAQTLRGTPASPEPDPAESLTASTNPLE. The interval 311–349 is disordered; it reads SETSSSRRKGTLAQTLRGTPASPEPDPAESLTASTNPLE.

It belongs to the G-protein coupled receptor 1 family. Phosphorylated by GRK6 upon leukotriene B4 binding; which promotes desensitization.

The protein localises to the cell membrane. Receptor for extracellular ATP &gt; UTP and ADP. The activity of this receptor is mediated by G proteins which activate a phosphatidylinositol-calcium second messenger system. May be the cardiac P2Y receptor involved in the regulation of cardiac muscle contraction through modulation of L-type calcium currents. Is a receptor for leukotriene B4, a potent chemoattractant involved in inflammation and immune response. The chain is Leukotriene B4 receptor 1 (LTB4R) from Bos taurus (Bovine).